The following is a 345-amino-acid chain: tRNA dimethylallyltransferase (345 aa).

9 to 16 (GPTASGKS) lines the ATP pocket. 11 to 16 (TASGKS) provides a ligand contact to substrate. 2 interaction with substrate tRNA regions span residues 34 to 37 (DSMQ) and 195 to 199 (QRMIR).

Belongs to the IPP transferase family. As to quaternary structure, monomer. The cofactor is Mg(2+).

The catalysed reaction is adenosine(37) in tRNA + dimethylallyl diphosphate = N(6)-dimethylallyladenosine(37) in tRNA + diphosphate. Its function is as follows. Catalyzes the transfer of a dimethylallyl group onto the adenine at position 37 in tRNAs that read codons beginning with uridine, leading to the formation of N6-(dimethylallyl)adenosine (i(6)A). The chain is tRNA dimethylallyltransferase from Orientia tsutsugamushi (strain Boryong) (Rickettsia tsutsugamushi).